The sequence spans 255 residues: uncharacterized protein (255 aa).

Residues 4–59 (RNERLNLIRKRVDQYGQVAVKDLAIFLQVTPETVRKDLETLENDKLITRTHGGAIQ) form the HTH deoR-type domain. The segment at residues 21–40 (VAVKDLAIFLQVTPETVRKD) is a DNA-binding region (H-T-H motif).

This is an uncharacterized protein from Staphylococcus epidermidis (strain ATCC 12228 / FDA PCI 1200).